A 31-amino-acid polypeptide reads, in one-letter code: SDIGGSMDYDVVIVGAGGAGLSAAILKQVNP.

Position 11–25 (11–25) interacts with FAD; it reads VVIVGAGGAGLSAAI.

In terms of assembly, monomer. The cofactor is [4Fe-4S] cluster. FAD serves as cofactor.

It catalyses the reaction a ubiquinone + reduced [electron-transfer flavoprotein] = a ubiquinol + oxidized [electron-transfer flavoprotein] + H(+). Accepts electrons from ETF and reduces ubiquinone. The chain is Electron transfer flavoprotein-ubiquinone oxidoreductase from Paracoccus denitrificans.